Consider the following 491-residue polypeptide: Probable cytosol aminopeptidase (491 aa).

Residues Lys-263 and Asp-268 each coordinate Mn(2+). Residue Lys-275 is part of the active site. Mn(2+) is bound by residues Asp-286, Asp-345, and Glu-347. Arg-349 is a catalytic residue.

This sequence belongs to the peptidase M17 family. It depends on Mn(2+) as a cofactor.

The protein localises to the cytoplasm. The enzyme catalyses Release of an N-terminal amino acid, Xaa-|-Yaa-, in which Xaa is preferably Leu, but may be other amino acids including Pro although not Arg or Lys, and Yaa may be Pro. Amino acid amides and methyl esters are also readily hydrolyzed, but rates on arylamides are exceedingly low.. The catalysed reaction is Release of an N-terminal amino acid, preferentially leucine, but not glutamic or aspartic acids.. Presumably involved in the processing and regular turnover of intracellular proteins. Catalyzes the removal of unsubstituted N-terminal amino acids from various peptides. In Haemophilus influenzae (strain PittGG), this protein is Probable cytosol aminopeptidase.